Reading from the N-terminus, the 285-residue chain is Phospholipid phosphatase 1 (285 aa).

At 1 to 6 (MFDKTR) the chain is on the cytoplasmic side. The short motif at 5-7 (TRL) is the PDZ-binding; involved in localization to the apical cell membrane element. A helical transmembrane segment spans residues 7-27 (LPYVALDVLCVLLAGLPFAIL). Residues 28–53 (TSRHTPFQRGLFCNDESIKYPYKEDT) are Extracellular-facing. The chain crosses the membrane as a helical span at residues 54 to 74 (IPYPLLGGIIIPFSIIVMIVG). Residues 75–94 (ETLSVYFNLLHSNSFIRNNY) lie on the Cytoplasmic side of the membrane. The helical transmembrane segment at 95-115 (IATIYKAIGTFLFGAAASQSL) threads the bilayer. Residues 116–164 (TDIAKYSIGRLRPHFLDVCDPDWSKINCSDGYIENYICRGNAQKVKEGR) are Extracellular-facing. Residues 120–128 (KYSIGRLRP) are phosphatase sequence motif I. Asn-142 is a glycosylation site (N-linked (GlcNAc...) asparagine). The chain crosses the membrane as a helical span at residues 165–185 (LSFYSGHSSFSMYCMLFVALY). The tract at residues 168-171 (YSGH) is phosphatase sequence motif II. Catalysis depends on His-171, which acts as the Proton donors. Residues 186-196 (LQARMKGDWAR) are Cytoplasmic-facing. A helical transmembrane segment spans residues 197-216 (LLRPTLQFGLVAVSIYVGLS). Residues 216-227 (SRVSDYKHHWSD) form a phosphatase sequence motif III region. At 217 to 229 (RVSDYKHHWSDVL) the chain is on the extracellular side. His-223 (nucleophile) is an active-site residue. The helical transmembrane segment at 230-250 (TGLIQGALVAIVVAVYVSDFF) threads the bilayer. The Cytoplasmic segment spans residues 251 to 285 (KERNSPFKERKEEDSHTTLHETPTTGNHYRNSHQP). Basic and acidic residues predominate over residues 257 to 269 (FKERKEEDSHTTL). Residues 257–285 (FKERKEEDSHTTLHETPTTGNHYRNSHQP) form a disordered region. Polar residues predominate over residues 270–285 (HETPTTGNHYRNSHQP).

This sequence belongs to the PA-phosphatase related phosphoesterase family. As to quaternary structure, forms functional homodimers and homooligomers that are not required for substrate recognition and catalytic activity. Can also form heterooligomers with PLPP2 and PLPP3. N-glycosylated. N-linked sugars are of the complex type. N-glycosylation is not required for the phosphatase activity.

The protein resides in the cell membrane. It localises to the apical cell membrane. It is found in the membrane raft. Its subcellular location is the membrane. The protein localises to the caveola. It carries out the reaction a 1,2-diacyl-sn-glycero-3-phosphate + H2O = a 1,2-diacyl-sn-glycerol + phosphate. The catalysed reaction is 1,2-dihexadecanoyl-sn-glycero-3-phosphate + H2O = 1,2-dihexadecanoyl-sn-glycerol + phosphate. It catalyses the reaction 1,2-di-(9Z-octadecenoyl)-sn-glycero-3-phosphate + H2O = 1,2-di-(9Z-octadecenoyl)-sn-glycerol + phosphate. The enzyme catalyses a monoacyl-sn-glycero-3-phosphate + H2O = a monoacylglycerol + phosphate. It carries out the reaction (9Z)-octadecenoyl-sn-glycero-3-phosphate + H2O = (9Z-octadecenoyl)-glycerol + phosphate. The catalysed reaction is a 1-acyl-sn-glycero-3-phosphate + H2O = a 1-acyl-sn-glycerol + phosphate. It catalyses the reaction 1-(9Z-octadecenoyl)-sn-glycero-3-phosphate + H2O = 1-(9Z-octadecenoyl)-sn-glycerol + phosphate. The enzyme catalyses a 1,2-diacyl-sn-glycerol 3-diphosphate + H2O = a 1,2-diacyl-sn-glycero-3-phosphate + phosphate + H(+). It carries out the reaction sphing-4-enine 1-phosphate + H2O = sphing-4-enine + phosphate. The catalysed reaction is an N-acylsphing-4-enine 1-phosphate + H2O = an N-acylsphing-4-enine + phosphate. It catalyses the reaction N-(octanoyl)-sphing-4-enine-1-phosphate + H2O = N-octanoylsphing-4-enine + phosphate. The enzyme catalyses N-(9Z-octadecenoyl)-ethanolamine phosphate + H2O = N-(9Z-octadecenoyl) ethanolamine + phosphate. It carries out the reaction 1-hexadecanoyl-2-(9Z-octadecenoyl)-sn-glycero-3-phosphate + H2O = 1-hexadecanoyl-2-(9Z-octadecenoyl)-sn-glycerol + phosphate. It participates in lipid metabolism; phospholipid metabolism. Magnesium-independent phospholipid phosphatase. Insensitive to N-ethylmaleimide. In terms of biological role, magnesium-independent phospholipid phosphatase of the plasma membrane that catalyzes the dephosphorylation of a variety of glycerolipid and sphingolipid phosphate esters including phosphatidate/PA, lysophosphatidate/LPA, diacylglycerol pyrophosphate/DGPP, sphingosine 1-phosphate/S1P and ceramide 1-phosphate/C1P. Also acts on N-oleoyl ethanolamine phosphate/N-(9Z-octadecenoyl)-ethanolamine phosphate, a potential physiological compound. Through its extracellular phosphatase activity allows both the hydrolysis and the cellular uptake of these bioactive lipid mediators from the milieu, regulating signal transduction in different cellular processes. It is for instance essential for the extracellular hydrolysis of S1P and subsequent conversion into intracellular S1P. Involved in the regulation of inflammation, platelets activation, cell proliferation and migration among other processes. May also have an intracellular activity to regulate phospholipid-mediated signaling pathways. The sequence is that of Phospholipid phosphatase 1 from Sus scrofa (Pig).